The sequence spans 633 residues: Probable extracellular metalloproteinase 3 (633 aa).

A signal peptide spans 1–18 (MHGLLLAGLLALPMNVLA). Residues 19-246 (HPAEQHASNV…VHNVVDYVAS (228 aa)) constitute a propeptide that is removed on maturation. A glycan (N-linked (GlcNAc...) asparagine) is linked at asparagine 410. Residue histidine 429 participates in Zn(2+) binding. Glutamate 430 is a catalytic residue. Histidine 433 serves as a coordination point for Zn(2+). N-linked (GlcNAc...) asparagine glycosylation is found at asparagine 480 and asparagine 622.

It belongs to the peptidase M36 family. Zn(2+) serves as cofactor.

Its subcellular location is the secreted. Its function is as follows. Secreted metalloproteinase probably acting as a virulence factor. The sequence is that of Probable extracellular metalloproteinase 3 (MEP3) from Trichophyton verrucosum (strain HKI 0517).